Here is a 539-residue protein sequence, read N- to C-terminus: MNYTLETADRALGAFPALLGAAFAHDSLFAAHMWVLFFTLVVSTLLLLRRVSFLPPVAGPPCRRTEYFDEVVKYGVMATVFWGVVGFLVGVVVALQLAFPDLNIAPYFNFGRMRPLHTSAVIFAFGGNALIATSFYVVQRTCRARLFGGNLGWFVFWGYNLFIIMAATGYLLGITQGREYAEPEWYVDLWLTIVWVAYLATFLGTILTRKEPHISVANWFYLSFIVTIAMLHIVNNLAVPVSFLGVKSYSAFSGVQAALTQWWYGHNAVGFFLTAGFLGMMYYFIPKQVNRPVYSYRLSIIHFWALIFMYIWAGPHHLHYTALPDWAQTLGMVFSIMLWMPSWGGMINGLMTLSGAWDKIRTDPIVRMMVMAVAFYGMATFEGPMMSIKAVNSLSHYTDWTIGHVHSGALGWNGMITFGAIYYLTPKLWGRDRLYSLQLVNWHFWLATLGIVVYAAVMWVAGIQQALMWREYDSQGFLVYSFAESVAALFPYYVMRALGGLMFLSGALIMAYNVTMTILGHQREEGASKGAAPSLQPAE.

The next 2 helical transmembrane spans lie at 28–48 and 75–95; these read LFAAHMWVLFFTLVVSTLLLL and GVMATVFWGVVGFLVGVVVAL. Position 117 (His117) interacts with heme b. Transmembrane regions (helical) follow at residues 118 to 138, 154 to 174, 187 to 207, 214 to 234, 265 to 285, 298 to 318, 330 to 350, 368 to 388, 402 to 422, 443 to 463, and 498 to 518; these read TSAVIFAFGGNALIATSFYVV, FVFWGYNLFIIMAATGYLLGI, VDLWLTIVWVAYLATFLGTIL, ISVANWFYLSFIVTIAMLHIV, GHNAVGFFLTAGFLGMMYYFI, LSIIHFWALIFMYIWAGPHHL, LGMVFSIMLWMPSWGGMINGL, MMVMAVAFYGMATFEGPMMSI, IGHVHSGALGWNGMITFGAIY, HFWLATLGIVVYAAVMWVAGI, and LGGLMFLSGALIMAYNVTMTI. Residues His266, His316, and His317 each contribute to the Cu cation site. Heme b is bound by residues His404 and His406.

This sequence belongs to the heme-copper respiratory oxidase family. Cu(2+) serves as cofactor. It depends on heme b as a cofactor.

Its subcellular location is the cell membrane. The catalysed reaction is 4 Fe(II)-[cytochrome c] + O2 + 8 H(+)(in) = 4 Fe(III)-[cytochrome c] + 2 H2O + 4 H(+)(out). It participates in energy metabolism; oxidative phosphorylation. In terms of biological role, cytochrome c oxidase is the component of the respiratory chain that catalyzes the reduction of oxygen to water. Subunits 1-3 form the functional core of the enzyme complex. Co I is the catalytic subunit of the enzyme. Electrons originating in cytochrome c or a quinol are transferred to the bimetallic center formed by a high-spin heme and copper B. In Agrobacterium tumefaciens (strain T37), this protein is Cytochrome c oxidase subunit 1 homolog (fixN).